A 431-amino-acid chain; its full sequence is Growth-regulating factor 9 (431 aa).

Residues Trp24 to Asn59 enclose the QLQ domain. WRC domains lie at Glu89 to Ser133 and Asp307 to Thr351. Short sequence motifs (bipartite nuclear localization signal) lie at residues Arg94 to Arg104, Arg122 to Lys129, Arg312 to Arg322, and Arg340 to Lys345.

It belongs to the GRF family. In terms of assembly, interacts with GIF1. As to expression, detected in the shoot apical meristem (SAM) and in young leaf primordium.

It localises to the nucleus. Functionally, transcription activator that plays a role in the regulation of cell expansion in leaf and cotyledons tissues. Component of a network formed by miR396, the GRFs and their interacting factors (GIFs) acting in the regulation of meristem function, at least partially through the control of cell proliferation. This chain is Growth-regulating factor 9 (GRF9), found in Arabidopsis thaliana (Mouse-ear cress).